The sequence spans 391 residues: Heme A synthase (391 aa).

8 consecutive transmembrane segments (helical) span residues 37 to 57 (IRLW…VGGL), 121 to 141 (RQLG…FLAA), 152 to 172 (LLAL…MVAS), 186 to 206 (LATH…QALL), 229 to 249 (TTVL…VAGI), 298 to 318 (FLHR…WIFG), 332 to 352 (LLAM…LSAA), and 354 to 374 (WQVA…ILHA). Residue histidine 300 coordinates heme. Histidine 360 contributes to the heme binding site.

This sequence belongs to the COX15/CtaA family. Type 2 subfamily. Interacts with CtaB. Heme b serves as cofactor.

It is found in the cell membrane. It catalyses the reaction Fe(II)-heme o + 2 A + H2O = Fe(II)-heme a + 2 AH2. The protein operates within porphyrin-containing compound metabolism; heme A biosynthesis; heme A from heme O: step 1/1. Catalyzes the conversion of heme O to heme A by two successive hydroxylations of the methyl group at C8. The first hydroxylation forms heme I, the second hydroxylation results in an unstable dihydroxymethyl group, which spontaneously dehydrates, resulting in the formyl group of heme A. The polypeptide is Heme A synthase (Cereibacter sphaeroides (strain KD131 / KCTC 12085) (Rhodobacter sphaeroides)).